The primary structure comprises 475 residues: Exodeoxyribonuclease 7 large subunit (475 aa).

The protein belongs to the XseA family. In terms of assembly, heterooligomer composed of large and small subunits.

The protein resides in the cytoplasm. It catalyses the reaction Exonucleolytic cleavage in either 5'- to 3'- or 3'- to 5'-direction to yield nucleoside 5'-phosphates.. Functionally, bidirectionally degrades single-stranded DNA into large acid-insoluble oligonucleotides, which are then degraded further into small acid-soluble oligonucleotides. This chain is Exodeoxyribonuclease 7 large subunit, found in Bartonella henselae (strain ATCC 49882 / DSM 28221 / CCUG 30454 / Houston 1) (Rochalimaea henselae).